A 263-amino-acid chain; its full sequence is Eukaryotic translation initiation factor 3 subunit J-B (263 aa).

The segment covering 1–13 has biased composition (low complexity); the sequence is MAAAAAAAAAAAA. The interval 1–115 is disordered; the sequence is MAAAAAAAAA…EPEESKVLTP (115 aa). An N-acetylalanine modification is found at Ala2. The segment at 6-74 is sufficient for interaction with EIF3B; that stretch reads AAAAAAAAGD…KEEAEVKPEV (69 aa). A phosphoserine mark is found at Ser16, Ser18, and Ser25. Residues 45–66 show a composition bias toward acidic residues; that stretch reads EGEDEDEDVKDNWDDDDDENKE. Positions 67–111 are enriched in basic and acidic residues; it reads EAEVKPEVKISEKKKIAEKIKEKERQQKKRQEEIKKRLEEPEESK. A coiled-coil region spans residues 75-140; sequence KISEKKKIAE…ESDLELAKET (66 aa). Lys111 participates in a covalent cross-link: Glycyl lysine isopeptide (Lys-Gly) (interchain with G-Cter in SUMO2). Thr114 is modified (phosphothreonine). Ser132 carries the phosphoserine modification. The segment at 248–263 is promotes stable association with the 40S ribosome; sequence YGGYEGGYVQDYEDFM. Tyr259 carries the post-translational modification Phosphotyrosine.

Belongs to the eIF-3 subunit J family. As to quaternary structure, component of the eukaryotic translation initiation factor 3 (eIF-3) complex, which is composed of 13 subunits: EIF3A, EIF3B, EIF3C, EIF3D, EIF3E, EIF3F, EIF3G, EIF3H, EIF3I, EIF3J, EIF3K, EIF3L and EIF3M. The eIF-3 complex appears to include 3 stable modules: module A is composed of EIF3A, EIF3B, EIF3G and EIF3I; module B is composed of EIF3F, EIF3H, and EIF3M; and module C is composed of EIF3C, EIF3D, EIF3E, EIF3K and EIF3L. EIF3C of module C binds EIF3B of module A and EIF3H of module B, thereby linking the three modules. EIF3J is a labile subunit that binds to the eIF-3 complex via EIF3B. The eIF-3 complex interacts with RPS6KB1 under conditions of nutrient depletion. Mitogenic stimulation leads to binding and activation of a complex composed of MTOR and RPTOR, leading to phosphorylation and release of RPS6KB1 and binding of EIF4B to eIF-3. In terms of processing, phosphorylated. Phosphorylation is enhanced upon serum stimulation.

It localises to the cytoplasm. Component of the eukaryotic translation initiation factor 3 (eIF-3) complex, which is required for several steps in the initiation of protein synthesis. The eIF-3 complex associates with the 40S ribosome and facilitates the recruitment of eIF-1, eIF-1A, eIF-2:GTP:methionyl-tRNAi and eIF-5 to form the 43S pre-initiation complex (43S PIC). The eIF-3 complex stimulates mRNA recruitment to the 43S PIC and scanning of the mRNA for AUG recognition. The eIF-3 complex is also required for disassembly and recycling of post-termination ribosomal complexes and subsequently prevents premature joining of the 40S and 60S ribosomal subunits prior to initiation. The eIF-3 complex specifically targets and initiates translation of a subset of mRNAs involved in cell proliferation, including cell cycling, differentiation and apoptosis, and uses different modes of RNA stem-loop binding to exert either translational activation or repression. This subunit binds directly within the mRNA entry channel of the 40S ribosome to the aminoacyl (A) site. It may regulate the interaction between the 43S PIC and mRNA. This is Eukaryotic translation initiation factor 3 subunit J-B (Eif3j2) from Mus musculus (Mouse).